Reading from the N-terminus, the 419-residue chain is Tyrosine--tRNA ligase (419 aa).

Tyr-34 is an L-tyrosine binding site. The 'HIGH' region signature appears at 39-48 (PSGDSMHIGH). Positions 168 and 172 each coordinate L-tyrosine. The 'KMSKS' region motif lies at 230-234 (KFGKS). Residue Lys-233 coordinates ATP. The region spanning 352 to 418 (VNLVDWLVSL…GKKKYFLVSY (67 aa)) is the S4 RNA-binding domain.

This sequence belongs to the class-I aminoacyl-tRNA synthetase family. TyrS type 1 subfamily. In terms of assembly, homodimer.

It localises to the cytoplasm. It catalyses the reaction tRNA(Tyr) + L-tyrosine + ATP = L-tyrosyl-tRNA(Tyr) + AMP + diphosphate + H(+). Its function is as follows. Catalyzes the attachment of tyrosine to tRNA(Tyr) in a two-step reaction: tyrosine is first activated by ATP to form Tyr-AMP and then transferred to the acceptor end of tRNA(Tyr). The protein is Tyrosine--tRNA ligase of Listeria welshimeri serovar 6b (strain ATCC 35897 / DSM 20650 / CCUG 15529 / CIP 8149 / NCTC 11857 / SLCC 5334 / V8).